A 357-amino-acid chain; its full sequence is S-adenosylmethionine decarboxylase proenzyme (357 aa).

Catalysis depends on residues E11 and E14. The active-site Schiff-base intermediate with substrate; via pyruvic acid is the S71. S71 carries the post-translational modification Pyruvic acid (Ser); by autocatalysis. The active-site Proton donor; for catalytic activity is the C85. Catalysis depends on proton acceptor; for processing activity residues S234 and H247.

Belongs to the eukaryotic AdoMetDC family. Pyruvate serves as cofactor. In terms of processing, is synthesized initially as an inactive proenzyme. Formation of the active enzyme involves a self-maturation process in which the active site pyruvoyl group is generated from an internal serine residue via an autocatalytic post-translational modification. Two non-identical subunits are generated from the proenzyme in this reaction, and the pyruvate is formed at the N-terminus of the alpha chain, which is derived from the carboxyl end of the proenzyme. The post-translation cleavage follows an unusual pathway, termed non-hydrolytic serinolysis, in which the side chain hydroxyl group of the serine supplies its oxygen atom to form the C-terminus of the beta chain, while the remainder of the serine residue undergoes an oxidative deamination to produce ammonia and the pyruvoyl group blocking the N-terminus of the alpha chain.

The catalysed reaction is S-adenosyl-L-methionine + H(+) = S-adenosyl 3-(methylsulfanyl)propylamine + CO2. It participates in amine and polyamine biosynthesis; S-adenosylmethioninamine biosynthesis; S-adenosylmethioninamine from S-adenosyl-L-methionine: step 1/1. This Catharanthus roseus (Madagascar periwinkle) protein is S-adenosylmethionine decarboxylase proenzyme (SAMDC).